A 98-amino-acid chain; its full sequence is MNAERLMMVLREPHTSEKATVMADKFKQFTFKVLKNATKTEIKLAVEHIFNVKVKSVSVVNVKGKSKRFKQTSGKRSDWKKAFVSLHADQDIDFTVTE.

Belongs to the universal ribosomal protein uL23 family. Part of the 50S ribosomal subunit. Contacts protein L29, and trigger factor when it is bound to the ribosome.

Its function is as follows. One of the early assembly proteins it binds 23S rRNA. One of the proteins that surrounds the polypeptide exit tunnel on the outside of the ribosome. Forms the main docking site for trigger factor binding to the ribosome. This chain is Large ribosomal subunit protein uL23, found in Legionella pneumophila (strain Paris).